Consider the following 925-residue polypeptide: Serine/threonine-protein phosphatase 1 regulatory subunit 10 (925 aa).

Residues 1 to 348 (MGSGPIDPKE…EPAPPSEAMD (348 aa)) form an interaction with TOX4 region. One can recognise a TFIIS N-terminal domain in the interval 73–147 (KLLNNWLTYS…SDWMAVIRSQ (75 aa)). The disordered stretch occupies residues 147-211 (QSSTQPAEKD…APSHAKFRST (65 aa)). Composition is skewed to basic and acidic residues over residues 153-166 (AEKDKKKRKEEGKS) and 174-196 (PLTEVKAETRAEEAPEKKREKPK). Glycyl lysine isopeptide (Lys-Gly) (interchain with G-Cter in SUMO2) cross-links involve residues lysine 179 and lysine 262. 3 disordered regions span residues 304-398 (KIKK…KRKT), 536-555 (TLEPGGAGGSPDGAGGSKLP), and 587-890 (SIMG…HGGD). At serine 313 the chain carries Phosphoserine. Positions 325-336 (KTSTEPSTAKPS) are enriched in low complexity. Positions 357–433 (PPVEVPELMD…NKIKDFGEAA (77 aa)) are necessary for interaction with PPP1CA. Position 382 is a phosphoserine (serine 382). Residues 393–408 (GRKRKTVTWPEEGKLR) are necessary for interaction with PPP1CC. Residues 394 to 423 (RKRKTVTWPEEGKLREYFYFELDETERVNV) carry the PP1-binding motif motif. The residue at position 398 (threonine 398) is a Phosphothreonine; by PKA. The interval 418-619 (TERVNVNKIK…IKQMLVPHGL (202 aa)) is interaction with WDR82. Positions 540–551 (GGAGGSPDGAGG) are enriched in gly residues. Phosphoserine is present on residues serine 545 and serine 591. Over residues 596-611 (PSEELLKQPDYSDKIK) the composition is skewed to basic and acidic residues. Residues 644–655 (PPGPGGPMPGPH) are compositionally biased toward pro residues. The segment covering 656–665 (GGPGGPGGPV) has biased composition (gly residues). The residue at position 668 (arginine 668) is an Omega-N-methylarginine. The span at 679-693 (GDPFWDGPGDPMRGG) shows a compositional bias: low complexity. Residues arginine 696 and arginine 741 each carry the omega-N-methylarginine modification. 2 stretches are compositionally biased toward gly residues: residues 728–766 (ARGGRSGGGPPNGRGGPGGGMVGGGGHRPHEGPGGGMSS) and 775–829 (GPGG…AGGG). 2 stretches are compositionally biased toward basic and acidic residues: residues 846–871 (PHDVPGHRGHDHRGPPPHEHRGHDGP) and 879–890 (RGHDGGHNHGGD). The C3H1-type zinc-finger motif lies at 891-919 (MSKRPVCRHFMMKGNCRYENNCAFYHPGV).

In terms of assembly, component of the PNUTS-PP1 complex (also named PTW/PP1 complex), composed of PPP1R10/PNUTS, TOX4, WDR82, and PPP1CA (or PPP1CB or PPP1CC). Phosphorylated on Ser-398 by PKA within the region necessary for interaction with PPP1CA.

It is found in the nucleus. It localises to the chromosome. Its function is as follows. Substrate-recognition component of the PNUTS-PP1 protein phosphatase complex, a protein phosphatase 1 (PP1) complex that promotes RNA polymerase II transcription pause-release, allowing transcription elongation. Promoter-proximal pausing by RNA polymerase II is a transcription halt following transcription initiation but prior to elongation, which acts as a checkpoint to control that transcripts are favorably configured for transcriptional elongation. The PNUTS-PP1 complex mediates the release of RNA polymerase II from promoter-proximal region of genes by catalyzing dephosphorylation of proteins involved in transcription, such as AFF4, CDK9, MEPCE, INTS12, NCBP1, POLR2M/GDOWN1 and SUPT6H. The PNUTS-PP1 complex also regulates RNA polymerase II transcription termination by mediating dephosphorylation of SUPT5H in termination zones downstream of poly(A) sites, thereby promoting deceleration of RNA polymerase II transcription. PNUTS-PP1 complex is also involved in the response to replication stress by mediating dephosphorylation of POLR2A at 'Ser-5' of the CTD, promoting RNA polymerase II degradation. The PNUTS-PP1 complex also plays a role in the control of chromatin structure and cell cycle progression during the transition from mitosis into interphase. PNUTS-PP1 complex mediates dephosphorylation of MYC, promoting MYC stability by preventing MYC ubiquitination by the SCF(FBXW7) complex. In addition to acts as a substrate-recognition component, PPP1R10/PNUTS also acts as a nuclear targeting subunit for the PNUTS-PP1 complex. In some context, PPP1R10/PNUTS also acts as an inhibitor of protein phosphatase 1 (PP1) activity by preventing access to substrates, such as RB. This is Serine/threonine-protein phosphatase 1 regulatory subunit 10 (PPP1R10) from Sus scrofa (Pig).